The following is a 124-amino-acid chain: Small ribosomal subunit protein uS12c (124 aa).

It belongs to the universal ribosomal protein uS12 family. Part of the 30S ribosomal subunit.

The protein resides in the plastid. The protein localises to the chloroplast. Its function is as follows. With S4 and S5 plays an important role in translational accuracy. Located at the interface of the 30S and 50S subunits. This chain is Small ribosomal subunit protein uS12c (rps12), found in Ostreococcus tauri.